Consider the following 302-residue polypeptide: Sulfate adenylyltransferase subunit 2 (302 aa).

It belongs to the PAPS reductase family. CysD subfamily. As to quaternary structure, heterodimer composed of CysD, the smaller subunit, and CysN.

It carries out the reaction sulfate + ATP + H(+) = adenosine 5'-phosphosulfate + diphosphate. The protein operates within sulfur metabolism; hydrogen sulfide biosynthesis; sulfite from sulfate: step 1/3. Its function is as follows. With CysN forms the ATP sulfurylase (ATPS) that catalyzes the adenylation of sulfate producing adenosine 5'-phosphosulfate (APS) and diphosphate, the first enzymatic step in sulfur assimilation pathway. APS synthesis involves the formation of a high-energy phosphoric-sulfuric acid anhydride bond driven by GTP hydrolysis by CysN coupled to ATP hydrolysis by CysD. The sequence is that of Sulfate adenylyltransferase subunit 2 from Yersinia enterocolitica serotype O:8 / biotype 1B (strain NCTC 13174 / 8081).